The primary structure comprises 461 residues: Thyroid hormone receptor beta (461 aa).

Residues 1–24 (MTPNSMTENRLPAWDKQKPHPDRG) form a disordered region. The segment at 1–106 (MTPNSMTENR…IPSYLDKDEL (106 aa)) is modulating. Over residues 13-24 (AWDKQKPHPDRG) the composition is skewed to basic and acidic residues. Residues Cys-107, Cys-110, Cys-124, Cys-127, Cys-145, Cys-151, Cys-161, and Cys-164 each contribute to the Zn(2+) site. 2 consecutive NR C4-type zinc fingers follow at residues 107–127 (CVVC…CEGC) and 145–169 (CKYE…FKKC). The nuclear receptor DNA-binding region spans 107–181 (CVVCGDKATG…VGMATDLVLD (75 aa)). Residues 217–461 (EEWELIKTVT…PPLFLEVFED (245 aa)) enclose the NR LBD domain. An interaction with NR2F6 region spans residues 244–461 (KFLPEDIGQA…PPLFLEVFED (218 aa)). Residues Arg-282, Asn-331, and His-435 each contribute to the 3,3',5-triiodo-L-thyronine site. L-thyroxine is bound by residues Arg-282, Asn-331, and His-435.

The protein belongs to the nuclear hormone receptor family. NR1 subfamily. As to quaternary structure, binds DNA as a dimer; homodimer and heterodimer with RXRA. Interacts with the coactivators NCOA1/SRC1, NCOA2/GRIP1, NCOA7 and MED1/TRAP220 in a ligand-inducible manner. Interacts with the corepressor NCOR1 in absence of ligand. Interacts with C1D. Interacts with NR2F6; the interaction impairs the binding of the THRB homodimer and THRB:RXRB heterodimer to T3 response elements. Interacts with PRMT2 and THRSP. Interacts with TACC1; this interaction is decreased in the presence of thyroid hormone T3.

It is found in the nucleus. Functionally, nuclear hormone receptor that can act as a repressor or activator of transcription. High affinity receptor for thyroid hormones, including triiodothyronine and thyroxine. The protein is Thyroid hormone receptor beta (Thrb) of Rattus norvegicus (Rat).